A 161-amino-acid chain; its full sequence is Protein-export protein SecB (161 aa).

It belongs to the SecB family. In terms of assembly, homotetramer, a dimer of dimers. One homotetramer interacts with 1 SecA dimer.

Its subcellular location is the cytoplasm. In terms of biological role, one of the proteins required for the normal export of preproteins out of the cell cytoplasm. It is a molecular chaperone that binds to a subset of precursor proteins, maintaining them in a translocation-competent state. It also specifically binds to its receptor SecA. This Rhodopseudomonas palustris (strain BisA53) protein is Protein-export protein SecB.